Consider the following 62-residue polypeptide: Small ribosomal subunit protein eS31 (62 aa).

Zn(2+) is bound by residues Cys-29, Cys-32, Cys-48, and Cys-51. A C4-type zinc finger spans residues 29–51 (CPRCGSFMAFHKWPVPRWHCGKC).

Belongs to the eukaryotic ribosomal protein eS31 family. As to quaternary structure, part of the 30S ribosomal subunit. Zn(2+) serves as cofactor.

The protein is Small ribosomal subunit protein eS31 of Hyperthermus butylicus (strain DSM 5456 / JCM 9403 / PLM1-5).